We begin with the raw amino-acid sequence, 1036 residues long: UDP-N-acetylglucosamine--peptide N-acetylglucosaminyltransferase 110 kDa subunit (1036 aa).

Ala-2 carries the post-translational modification N-acetylalanine. A phosphoserine; by GSK3-beta; alternate mark is found at Ser-3 and Ser-4. O-linked (GlcNAc) serine; alternate glycosylation is found at Ser-3 and Ser-4. TPR repeat units lie at residues Ser-11–Asn-44, Ala-79–Phe-112, Ile-113–Leu-146, Tyr-147–Phe-180, Ala-181–Phe-214, Leu-215–His-248, Ala-249–Phe-282, Pro-283–His-316, Ala-317–Phe-350, Ala-351–Phe-384, Ala-385–Phe-418, and Ala-419–Phe-452. Ser-389 carries an O-linked (GlcNAc) serine; by autocatalysis glycan. Thr-444 bears the Phosphothreonine mark. Residues Pro-453–Leu-463 form a TPR 13; truncated repeat. Residues Asp-454 to Tyr-456 carry the DFP motif motif. A Nuclear localization signal motif is present at residues Lys-478–Pro-493. His-498 acts as the Proton acceptor in catalysis. Residues Gln-839, Lys-842, Ala-896–Lys-898, His-901–Arg-904, His-920–Thr-922, and Asp-925 contribute to the UDP site. A Phosphotyrosine modification is found at Tyr-979. Positions Lys-981–Lys-1000 are required for phosphatidylinositol 3,4,5-triphosphate binding.

Belongs to the glycosyltransferase 41 family. O-GlcNAc transferase subfamily. In terms of assembly, monomer; may exist in different oligomerization states in cells. Homotrimer, oligomerizes via TPR repeats 6 and 7. Trimerization is not necessary for activity in vitro, however it increases affinity for UDP-GlcNAc. A heterotrimer consisting of two 110 kDa subunits and one highly related 78 kDa subunit is isolated from liver. Component of a THAP1/THAP3-HCFC1-OGT complex. Component of the NSL complex at least composed of MOF/KAT8, KANSL1, KANSL2, KANSL3, MCRS1, PHF20, OGT1/OGT, WDR5 and HCFC1. Found in a complex with KIF5B, RHOT1, RHOT2 and TRAK1. Found in a complex composed of at least SINHCAF, SIN3A, HDAC1, SAP30, RBBP4, OGT and TET1. Component of a complex composed of KMT2E/MLL5, OGT and USP7; the complex stabilizes KMT2E/MLL5, preventing KMT2E/MLL5 ubiquitination and proteasomal-mediated degradation. Interacts (via TPRs 1-6) with SIN3A; the interaction mediates transcriptional repression in parallel with histone deacetylase. Interacts (via TPR 5-6) with TET1, TET2 and TET3. Interacts (via TPR repeats 6 and 7) with ATXN10. Interacts with NSD2. Interacts with PROSER1; this interaction mediates TET2 O-GlcNAcylation and stability by promoting the interaction between OGT and TET2. Several different immunologically-related forms of this protein are found in different tissues (with apparent molecular weights of 110, 80 and 78 kDa); they are probably the result of alternative splicing and/or proteolysis. Post-translationally, O-glycosylated; contains O-GlcNAc. Both p110 and p78 forms are O-glycosylated. In terms of processing, ubiquitinated by the SCF(FBXO31) complex, leading to its proteasomal degradation. Phosphorylation on Ser-3 or Ser-4 by GSK3-beta positively regulates its activity. Phosphorylation at Thr-444 by AMPK promotes nuclear localization. Post-translationally, glycosylated via autocatalysis; O-GlcNAcylation at Ser-389 promotes nuclear localization. As to expression, expressed in brain, heart, liver, thymus, muscle, lung, spleen, uterus and ovary; in the kidney only an immunologically-related 78 kDa band is present, which is also present in liver and muscle. In the pancreas, expressed in both exocrine acinar cells and in endocrine cells of the islets of Langerhans.

The protein localises to the cytoplasm. It is found in the nucleus. It localises to the cell membrane. Its subcellular location is the mitochondrion membrane. The protein resides in the cell projection. The enzyme catalyses L-seryl-[protein] + UDP-N-acetyl-alpha-D-glucosamine = 3-O-(N-acetyl-beta-D-glucosaminyl)-L-seryl-[protein] + UDP + H(+). It catalyses the reaction L-threonyl-[protein] + UDP-N-acetyl-alpha-D-glucosamine = 3-O-(N-acetyl-beta-D-glucosaminyl)-L-threonyl-[protein] + UDP + H(+). The protein operates within protein modification; protein glycosylation. With respect to regulation, inhibited by UDP, UTP and UDP-GlcNAc; 50 mM NaCl or KCl inhibit activity about 70%. Functionally, catalyzes the transfer of a single N-acetylglucosamine from UDP-GlcNAc to a serine or threonine residue in cytoplasmic and nuclear proteins resulting in their modification with a beta-linked N-acetylglucosamine (O-GlcNAc). Glycosylates a large and diverse number of proteins including histone H2B, AKT1, AMPK, ATG4B, CAPRIN1, EZH2, FNIP1, GSDMD, KRT7, LMNA, LMNB1, LMNB2, RPTOR, HOXA1, PFKL, KMT2E/MLL5, MAPT/TAU, TET2, RBL2, RET, NOD2 and HCFC1. Can regulate their cellular processes via cross-talk between glycosylation and phosphorylation or by affecting proteolytic processing. Involved in insulin resistance in muscle and adipocyte cells via glycosylating insulin signaling components and inhibiting the 'Thr-308' phosphorylation of AKT1, enhancing IRS1 phosphorylation and attenuating insulin signaling. Involved in glycolysis regulation by mediating glycosylation of 6-phosphofructokinase PFKL, inhibiting its activity. Plays a key role in chromatin structure by mediating O-GlcNAcylation of 'Ser-112' of histone H2B: recruited to CpG-rich transcription start sites of active genes via its interaction with TET proteins (TET1, TET2 or TET3). As part of the NSL complex indirectly involved in acetylation of nucleosomal histone H4 on several lysine residues. O-GlcNAcylation of 'Ser-75' of EZH2 increases its stability, and facilitating the formation of H3K27me3 by the PRC2/EED-EZH2 complex. Stabilizes KMT2E/MLL5 by mediating its glycosylation, thereby preventing KMT2E/MLL5 ubiquitination. Regulates circadian oscillation of the clock genes and glucose homeostasis in the liver. Stabilizes clock proteins BMAL1 and CLOCK through O-glycosylation, which prevents their ubiquitination and subsequent degradation. Promotes the CLOCK-BMAL1-mediated transcription of genes in the negative loop of the circadian clock such as PER1/2 and CRY1/2. O-glycosylates HCFC1 and regulates its proteolytic processing and transcriptional activity. Component of a THAP1/THAP3-HCFC1-OGT complex that is required for the regulation of the transcriptional activity of RRM1. Regulates mitochondrial motility in neurons by mediating glycosylation of TRAK1. Promotes autophagy by mediating O-glycosylation of ATG4B. Acts as a regulator of mTORC1 signaling by mediating O-glycosylation of RPTOR and FNIP1: O-GlcNAcylation of RPTOR in response to glucose sufficiency promotes activation of the mTORC1 complex. The protein is UDP-N-acetylglucosamine--peptide N-acetylglucosaminyltransferase 110 kDa subunit (Ogt) of Rattus norvegicus (Rat).